A 379-amino-acid chain; its full sequence is UDP-4-amino-4-deoxy-L-arabinose--oxoglutarate aminotransferase (379 aa).

N6-(pyridoxal phosphate)lysine is present on K182.

It belongs to the DegT/DnrJ/EryC1 family. ArnB subfamily. Homodimer. Pyridoxal 5'-phosphate serves as cofactor.

It carries out the reaction UDP-4-amino-4-deoxy-beta-L-arabinose + 2-oxoglutarate = UDP-beta-L-threo-pentopyranos-4-ulose + L-glutamate. It functions in the pathway nucleotide-sugar biosynthesis; UDP-4-deoxy-4-formamido-beta-L-arabinose biosynthesis; UDP-4-deoxy-4-formamido-beta-L-arabinose from UDP-alpha-D-glucuronate: step 2/3. The protein operates within bacterial outer membrane biogenesis; lipopolysaccharide biosynthesis. Its function is as follows. Catalyzes the conversion of UDP-4-keto-arabinose (UDP-Ara4O) to UDP-4-amino-4-deoxy-L-arabinose (UDP-L-Ara4N). The modified arabinose is attached to lipid A and is required for resistance to polymyxin and cationic antimicrobial peptides. The polypeptide is UDP-4-amino-4-deoxy-L-arabinose--oxoglutarate aminotransferase (Salmonella heidelberg (strain SL476)).